The sequence spans 229 residues: Large ribosomal subunit protein uL1 (229 aa).

Belongs to the universal ribosomal protein uL1 family. In terms of assembly, part of the 50S ribosomal subunit.

Functionally, binds directly to 23S rRNA. The L1 stalk is quite mobile in the ribosome, and is involved in E site tRNA release. In terms of biological role, protein L1 is also a translational repressor protein, it controls the translation of the L11 operon by binding to its mRNA. The sequence is that of Large ribosomal subunit protein uL1 from Ureaplasma parvum serovar 3 (strain ATCC 27815 / 27 / NCTC 11736).